We begin with the raw amino-acid sequence, 3394 residues long: Protein PFC0760c (3394 aa).

Low complexity-rich tracts occupy residues 471 to 508, 515 to 528, and 786 to 841; these read NNNDNDNNNDNNNNNNNNNDNNNNNNNDNNNNNNNYNN, NMNSGNHPNSNNLH, and NNQN…NQNN. 8 disordered regions span residues 471–539, 779–844, 1038–1099, 1892–1918, 2648–2693, 2835–2909, 3000–3057, and 3107–3394; these read NNND…DENN, MSSN…NAGI, NKKK…NNDD, TTTTTNNNNNNDNNNDNNNDNNDNNND, KMDL…DNHL, AKNE…NSNN, VSVG…DVNT, and DYVN…NSEE. Over residues 1038-1097 the composition is skewed to basic and acidic residues; that stretch reads NKKKNNDGDNKSQEDDDGNKKKNNDGDNKSQEDDDGNKKKNNDGDNKSQEDDYGNKKKNN. Acidic residues predominate over residues 2657-2671; that stretch reads GDDDDDDDDDDDDDN. The segment covering 2672–2686 has biased composition (low complexity); the sequence is NNNNNNNNNNNNNNM. The span at 2836 to 2846 shows a compositional bias: polar residues; the sequence is KNENYPVSTHY. Low complexity-rich tracts occupy residues 2855 to 2865 and 2872 to 2909; these read DNINNDNNNDN and NDNINNDNNNDNINNDNINNDNINNDNNNDNNNDNSNN. 2 stretches are compositionally biased toward acidic residues: residues 3007–3047 and 3147–3257; these read DNND…EEKE and DDDE…DDND. Residues 3258 to 3292 show a composition bias toward basic and acidic residues; the sequence is NDHNDDNNDEEKYSCHDDKNEHTNNDLLNIDHDNN. Over residues 3300–3309 the composition is skewed to polar residues; that stretch reads LYSTYNVSVS. Residues 3310–3320 show a composition bias toward basic and acidic residues; sequence HNKDPSNKENE. Polar residues predominate over residues 3321–3330; that stretch reads IQNLISIDSS. Positions 3331-3379 are enriched in acidic residues; sequence NENDENDENDENDENDENDENDENDENDENDENDEKDENDENDENDENF. The segment covering 3385–3394 has biased composition (polar residues); it reads GTLNEMNSEE.

In Plasmodium falciparum (isolate 3D7), this protein is Protein PFC0760c.